The primary structure comprises 77 residues: Small ribosomal subunit protein uS4 (77 aa).

The interval Pro-45–Glu-77 is disordered. Positions Gly-52–Ala-63 are enriched in basic residues.

This sequence belongs to the universal ribosomal protein uS4 family.

This is Small ribosomal subunit protein uS4 (RPS9) from Nicotiana tabacum (Common tobacco).